A 423-amino-acid polypeptide reads, in one-letter code: Endochitinase 42 (423 aa).

Positions 1-22 (MLSFLGKSVALLAALQATLSSP) are cleaved as a signal peptide. The propeptide occupies 23–34 (KPGHRRASVEKR). The GH18 domain maps to 38–401 (YANSVYFTNW…GTSHRALGGL (364 aa)). Chitin-binding positions include 102 to 103 (GT) and 129 to 132 (GGWT). The Proton donor role is filled by E171. Y172 lines the chitin pocket. N218 is a glycosylation site (N-linked (GlcNAc...) asparagine). Residues 237-240 (MAYD) and W378 contribute to the chitin site.

The protein belongs to the glycosyl hydrolase 18 family. Chitinase class V subfamily.

Its subcellular location is the secreted. The enzyme catalyses Random endo-hydrolysis of N-acetyl-beta-D-glucosaminide (1-&gt;4)-beta-linkages in chitin and chitodextrins.. In terms of biological role, secreted chitinase involved in the degradation of chitin, a component of the cell walls of fungi and exoskeletal elements of some animals (including worms and arthropods). Plays a morphogenetic role during apical growth, cell division and differentiation (cell wall morphogenesis). Also acts as an antifungal agent. Involved in the degradation and further assimilation of phytopathogenic fungi, namely mycoparasitism, the major mechanism accounting for the antagonistic activity against phytopathogenic fungi displayed by Trichoderma. In Trichoderma harzianum (Hypocrea lixii), this protein is Endochitinase 42 (chit42).